Consider the following 241-residue polypeptide: Large ribosomal subunit protein uL1 (241 aa).

Belongs to the universal ribosomal protein uL1 family. In terms of assembly, part of the 50S ribosomal subunit.

Binds directly to 23S rRNA. The L1 stalk is quite mobile in the ribosome, and is involved in E site tRNA release. In terms of biological role, protein L1 is also a translational repressor protein, it controls the translation of the L11 operon by binding to its mRNA. This chain is Large ribosomal subunit protein uL1, found in Streptomyces avermitilis (strain ATCC 31267 / DSM 46492 / JCM 5070 / NBRC 14893 / NCIMB 12804 / NRRL 8165 / MA-4680).